A 611-amino-acid chain; its full sequence is Fatty acid photodecarboxylase, chloroplastic (611 aa).

Positions 1–22 (MMLGPKTVTRGATKGAAPRSMA) are disordered. The N-terminal 36 residues, 1–36 (MMLGPKTVTRGATKGAAPRSMAARRVGGARRLSVRA), are a transit peptide targeting the chloroplast. FAD is bound by residues 55–56 (TA), E76, M125, S129, and 133–136 (NATL). Hexadecanoate contacts are provided by C392, R412, Y427, and Q447. G582 lines the FAD pocket.

It belongs to the GMC oxidoreductase family. It depends on FAD as a cofactor.

The protein localises to the plastid. Its subcellular location is the chloroplast. The catalysed reaction is a long-chain fatty acid + hnu + H(+) = a long-chain alkane + CO2. The enzyme catalyses hnu + hexadecanoate + H(+) = pentadecane + CO2. Its activity is regulated as follows. Activated by blue light and repressed by red light. Catalyzes the decarboxylation of free fatty acids to n-alkanes or n-alkenes in response to blue light. Substrate preference is toward fatty acids with C17 or C18 chains. Saturated fatty acids are converted to alkanes, not alkenes. The decarboxylation is initiated through electron abstraction from the fatty acid by the photo-excited FAD. This Chlamydomonas reinhardtii (Chlamydomonas smithii) protein is Fatty acid photodecarboxylase, chloroplastic.